A 350-amino-acid polypeptide reads, in one-letter code: MEGPEVTDGDNVLNLTHLGLENLNLELVSENKRKDVQQILLPHNRLVVLPPLVASFIHLHLLDISNNNMVYIGEEILGLTKLKTLLAKNNRLDEFSFPKEMGGMRLEVLNLSGNRFEEIPDQFLQIPTLKSLSLGGNRLKSIPAEIENLISLEFLYLGGNFISSIPSELANLPYLSYLVLCDNRIQSIPPQLAQVHSLRSLSLHNNLLTYLPREILSLVHLHELSLRGNPLVVRFVRDLTYTPPTLLELAGRTIKSHGIPYCPWELPENLLRYLDLASKCPNPKCSGVYFDCCVRQIKFVDFCGKYRLPLMHYLCSPECSSPCGSTSHSESDSEDEVNVAARRMQKVLLG.

10 LRR repeats span residues 14-34, 35-56, 58-80, 81-102, 105-125, 128-149, 151-173, 174-195, 197-218, and 220-240; these read NLTHLGLENLNLELVSENKRK, DVQQILLPHNRLVVLPPLVASF, HLHLLDISNNNMVYIGEEILGLT, KLKTLLAKNNRLDEFSFPKEMG, RLEVLNLSGNRFEEIPDQFLQ, TLKSLSLGGNRLKSIPAEIENL, SLEFLYLGGNFISSIPSELANLP, YLSYLVLCDNRIQSIPPQLAQV, SLRSLSLHNNLLTYLPREILSL, and HLHELSLRGNPLVVRFVRDLT.

The polypeptide is Leucine-rich repeat-containing protein 58 (lrrc58) (Xenopus laevis (African clawed frog)).